Consider the following 565-residue polypeptide: Methionine--tRNA ligase (565 aa).

The 'HIGH' region motif lies at 16-26 (PYAYGVPHLGN). Zn(2+) contacts are provided by C148, C151, C161, and C164. The 'KMSKS' region motif lies at 338–342 (KFSKS). K341 lines the ATP pocket.

Belongs to the class-I aminoacyl-tRNA synthetase family. MetG type 1 subfamily. The cofactor is Zn(2+).

It localises to the cytoplasm. The catalysed reaction is tRNA(Met) + L-methionine + ATP = L-methionyl-tRNA(Met) + AMP + diphosphate. Is required not only for elongation of protein synthesis but also for the initiation of all mRNA translation through initiator tRNA(fMet) aminoacylation. The chain is Methionine--tRNA ligase from Thermofilum pendens (strain DSM 2475 / Hrk 5).